Reading from the N-terminus, the 197-residue chain is Putative rho GDP-dissociation inhibitor 1 (197 aa).

The protein belongs to the Rho GDI family. In terms of assembly, interacts with rac1A, rac1B, rac1C, racB, raCC and RacE.

The protein localises to the cytoplasm. Its function is as follows. Regulates the GDP/GTP exchange reaction of the Rho proteins by inhibiting the dissociation of GDP from them, and the subsequent binding of GTP to them. Regulates the Rac-dependent signaling pathways controlling cytokinesis, actin reorganization and the contractile vacuole. Required for efficient accumulation of cap at the cell cortex. In Dictyostelium discoideum (Social amoeba), this protein is Putative rho GDP-dissociation inhibitor 1 (rdiA).